A 150-amino-acid polypeptide reads, in one-letter code: L-alanine exporter AlaE (150 aa).

4 helical membrane passes run 17–37 (FAMV…ISGM), 48–68 (LSIP…DFML), 86–106 (LVAY…VVGA), and 111–131 (IITA…FYGY).

This sequence belongs to the AlaE exporter family.

Its subcellular location is the cell inner membrane. In terms of biological role, exports L-alanine. This is L-alanine exporter AlaE from Aliivibrio fischeri (strain ATCC 700601 / ES114) (Vibrio fischeri).